A 337-amino-acid polypeptide reads, in one-letter code: CMP-sialic acid transporter (337 aa).

Residues 1–9 (MAAPRDNVT) lie on the Cytoplasmic side of the membrane. Residues 10–30 (LLFKLYCLAVMTLMAAVYTIA) traverse the membrane as a helical segment. At 31-45 (LRYTRTSDKELYFST) the chain is on the lumenal side. The chain crosses the membrane as a helical span at residues 46–64 (TAVCITEVIKLLLSVGILA). Residue Lys-55 participates in CMP-N-acetyl-beta-neuraminate binding. Residues 65-87 (KETGSLGRFKASLRENVLGSPKE) are Cytoplasmic-facing. Residues 88–108 (LLKLSVPSLVYAVQNNMAFLA) traverse the membrane as a helical segment. A CMP-N-acetyl-beta-neuraminate-binding site is contributed by 101-102 (QN). Residues 109–114 (LSNLDA) lie on the Lumenal side of the membrane. Residues 115–135 (AVYQVTYQLKIPCTALCTVLM) form a helical membrane-spanning segment. Residue 117–124 (YQVTYQLK) coordinates CMP-N-acetyl-beta-neuraminate. The Cytoplasmic segment spans residues 136 to 141 (LNRTLS). Residues 142–160 (KLQWVSVFMLCAGVTLVQW) traverse the membrane as a helical segment. Residues 161–175 (KPAQATKVVVEQNPL) are Lumenal-facing. The helical transmembrane segment at 176 to 196 (LGFGAIAIAVLCSGFAGVYFE) threads the bilayer. Ser-188 provides a ligand contact to CMP-N-acetyl-beta-neuraminate. Over 197-209 (KVLKSSDTSLWVR) the chain is Cytoplasmic. Residue 210-214 (NIQMY) participates in CMP-N-acetyl-beta-neuraminate binding. A helical membrane pass occupies residues 210–228 (NIQMYLSGIIVTLAGVYLS). The Lumenal segment spans residues 229–243 (DGAEIKEKGFFYGYT). The chain crosses the membrane as a helical span at residues 244 to 262 (YYVWFVIFLASVGGLYTSV). Over 263-269 (VVKYTDN) the chain is Cytoplasmic. A helical membrane pass occupies residues 270 to 288 (IMKGFSAAAAIVLSTIASV). Lys-272 provides a ligand contact to CMP-N-acetyl-beta-neuraminate. Over 289–296 (MLFGLQIT) the chain is Lumenal. The chain crosses the membrane as a helical span at residues 297–315 (LTFALGTLLVCVSIYLYGL). At 316–337 (PRQDTTSIQQGETASKERVIGV) the chain is on the cytoplasmic side. Positions 316-337 (PRQDTTSIQQGETASKERVIGV) are disordered.

Belongs to the nucleotide-sugar transporter family. SLC35A subfamily. In terms of assembly, monomer.

The protein resides in the golgi apparatus membrane. Its subcellular location is the golgi apparatus. The enzyme catalyses CMP-N-acetyl-beta-neuraminate(in) + CMP(out) = CMP-N-acetyl-beta-neuraminate(out) + CMP(in). The catalysed reaction is CMP-N-acetyl-beta-neuraminate(in) + AMP(out) = CMP-N-acetyl-beta-neuraminate(out) + AMP(in). It catalyses the reaction CDP-L-ribitol(in) + CDP(out) = CDP-L-ribitol(out) + CDP(in). It carries out the reaction UMP(out) + CMP-N-acetyl-beta-neuraminate(in) = UMP(in) + CMP-N-acetyl-beta-neuraminate(out). Functionally, transports CMP-sialic acid from the cytosol into the Golgi apparatus, functioning as an antiporter that exchanges CMP-sialic acid for CMP. Binds both CMP-sialic acid and free CMP, but has higher affinity for free CMP. Also able to exchange CMP-sialic acid for AMP and UMP. Also mediates the transport of CDP-ribitol. In Homo sapiens (Human), this protein is CMP-sialic acid transporter.